A 339-amino-acid polypeptide reads, in one-letter code: ADP,ATP carrier protein (339 aa).

Solcar repeat units follow at residues 39–133 (MAFV…IKGL), 145–234 (RFFV…AKGV), and 246–328 (AKWA…IKKF). 5 helical membrane passes run 41–70 (FVKD…LLLQ), 110–134 (LANV…KGLF), 144–164 (WRFF…SLLI), 212–232 (VSVQ…DTAK), and 245–265 (FAKW…SYPF). Residues Arg-115 and Lys-127 each coordinate ADP. Arg-269 is an ADP binding site. The important for transport activity stretch occupies residues 269–274 (RRRLMM). Positions 269 to 274 (RRRLMM) match the Nucleotide carrier signature motif motif. A helical transmembrane segment spans residues 305–322 (AWSNVLRGAGGAFVLVLY).

Belongs to the mitochondrial carrier (TC 2.A.29) family. As to quaternary structure, monomer.

It localises to the mitochondrion inner membrane. The catalysed reaction is ADP(in) + ATP(out) = ADP(out) + ATP(in). The matrix-open state (m-state) is inhibited by the membrane-permeable bongkrekic acid (BKA). The cytoplasmic-open state (c-state) is inhibited by the membrane-impermeable toxic inhibitor carboxyatractyloside (CATR). ADP:ATP antiporter that mediates import of ADP into the mitochondrial matrix for ATP synthesis, and export of ATP out to fuel the cell. Cycles between the cytoplasmic-open state (c-state) and the matrix-open state (m-state): operates by the alternating access mechanism with a single substrate-binding site intermittently exposed to either the cytosolic (c-state) or matrix (m-state) side of the inner mitochondrial membrane. The chain is ADP,ATP carrier protein from Parachlorella kessleri (Green alga).